A 346-amino-acid polypeptide reads, in one-letter code: MSEAYKQAGVDIDAGNEAVERMKKHVKRTFRPEVMTDLGGFGALFRLDTKKYEKPILVSGTDGVGTKLKLAFAMDKHDTIGIDAVAMCVNDVVVQGAEPLFFLDYLAVDKVIPEKIEAIVKGIAEGCSQSGCSLIGGETAEMPGMYAEGEYDIAGFTVGVVDESKMITGASVAAGDVLIGLASSGVHSNGFSLVRKVLLADKGMSLHDHVDVLGKKLGEELLTPTRIYVKQVLSVLESHEVKALVHITGGGFTENIPRVLPEGMQAVINVGSWPVLPIFELVQGAGNISYPDMYKTFNMGIGMMLVVKPEDAVSVMEKLQELGEQAYLIGNIQAGERKVVYNGVEW.

Belongs to the AIR synthase family.

The protein resides in the cytoplasm. It carries out the reaction 2-formamido-N(1)-(5-O-phospho-beta-D-ribosyl)acetamidine + ATP = 5-amino-1-(5-phospho-beta-D-ribosyl)imidazole + ADP + phosphate + H(+). The protein operates within purine metabolism; IMP biosynthesis via de novo pathway; 5-amino-1-(5-phospho-D-ribosyl)imidazole from N(2)-formyl-N(1)-(5-phospho-D-ribosyl)glycinamide: step 2/2. The sequence is that of Phosphoribosylformylglycinamidine cyclo-ligase from Brevibacillus brevis (strain 47 / JCM 6285 / NBRC 100599).